Consider the following 105-residue polypeptide: Large ribosomal subunit protein uL24 (105 aa).

This sequence belongs to the universal ribosomal protein uL24 family. As to quaternary structure, part of the 50S ribosomal subunit.

Functionally, one of two assembly initiator proteins, it binds directly to the 5'-end of the 23S rRNA, where it nucleates assembly of the 50S subunit. In terms of biological role, one of the proteins that surrounds the polypeptide exit tunnel on the outside of the subunit. The polypeptide is Large ribosomal subunit protein uL24 (Rhodospirillum centenum (strain ATCC 51521 / SW)).